Consider the following 559-residue polypeptide: Leucine-rich repeat-containing protein 71 (559 aa).

Over residues 1–18 the composition is skewed to low complexity; sequence MSSEQSAPGASPRAPRPG. Residues 1–56 form a disordered region; the sequence is MSSEQSAPGASPRAPRPGTQKSSGAVTKKGERAAKEKPATVLPPVGEEEPKSPEEY. The span at 28–38 shows a compositional bias: basic and acidic residues; that stretch reads KKGERAAKEKP. LRR repeat units lie at residues 172-193, 196-216, 221-241, 253-266, and 281-302; these read NLWKVGLTDKTLTTFIELLPLC, TLRKVSLEGNPLPEQSYHKLM, TIAHLSLRNNNIDDRGAQLLG, TLVSLNLGFNHIGD, and SLLWLSLAHNRIQDKGALKLAE. Basic and acidic residues-rich tracts occupy residues 324–348 and 380–391; these read KGTQERSRSPSSSRHGDSKTDREKS and KSWELAKKEEKL. Positions 324-427 are disordered; that stretch reads KGTQERSRSP…PEQKPSRAKG (104 aa).

The protein is Leucine-rich repeat-containing protein 71 (LRRC71) of Homo sapiens (Human).